The chain runs to 365 residues: tRNA-specific 2-thiouridylase MnmA (365 aa).

ATP contacts are provided by residues 9-16 and M35; that span reads GLSGGVDS. Residues 95–97 are interaction with target base in tRNA; sequence NPD. C100 functions as the Nucleophile in the catalytic mechanism. Cysteines 100 and 196 form a disulfide. G124 provides a ligand contact to ATP. Residues 146–148 are interaction with tRNA; sequence KDQ. C196 functions as the Cysteine persulfide intermediate in the catalytic mechanism. Residues 315–316 are interaction with tRNA; sequence RY.

This sequence belongs to the MnmA/TRMU family.

Its subcellular location is the cytoplasm. The catalysed reaction is S-sulfanyl-L-cysteinyl-[protein] + uridine(34) in tRNA + AH2 + ATP = 2-thiouridine(34) in tRNA + L-cysteinyl-[protein] + A + AMP + diphosphate + H(+). Its function is as follows. Catalyzes the 2-thiolation of uridine at the wobble position (U34) of tRNA, leading to the formation of s(2)U34. This is tRNA-specific 2-thiouridylase MnmA from Dechloromonas aromatica (strain RCB).